A 140-amino-acid polypeptide reads, in one-letter code: Transcription antitermination protein NusB (140 aa).

The protein belongs to the NusB family.

Its function is as follows. Involved in transcription antitermination. Required for transcription of ribosomal RNA (rRNA) genes. Binds specifically to the boxA antiterminator sequence of the ribosomal RNA (rrn) operons. In Pseudoalteromonas atlantica (strain T6c / ATCC BAA-1087), this protein is Transcription antitermination protein NusB.